A 444-amino-acid polypeptide reads, in one-letter code: Putative dipeptidase CPC735_015490 (444 aa).

The first 34 residues, 1-34 (MSQRTEHNGSWLRNAGSLLSVLACVAVLASPASA), serve as a signal peptide directing secretion. Residues histidine 67, aspartate 69, and glutamate 178 each contribute to the Zn(2+) site. Cysteine 118 and cysteine 207 form a disulfide bridge. Position 205 (histidine 205) interacts with substrate. Positions 250 and 271 each coordinate Zn(2+). Arginine 282 and aspartate 342 together coordinate substrate. N-linked (GlcNAc...) asparagine glycosylation occurs at asparagine 413.

The protein belongs to the metallo-dependent hydrolases superfamily. Peptidase M19 family. Zn(2+) is required as a cofactor.

It carries out the reaction an L-aminoacyl-L-amino acid + H2O = 2 an L-alpha-amino acid. Its function is as follows. Hydrolyzes a wide range of dipeptides. The protein is Putative dipeptidase CPC735_015490 of Coccidioides posadasii (strain C735) (Valley fever fungus).